The sequence spans 515 residues: Bifunctional purine biosynthesis protein PurH (515 aa).

In terms of domain architecture, MGS-like spans 1-145 (MTKRALISVS…KNHASVTVVV (145 aa)).

The protein belongs to the PurH family.

The enzyme catalyses (6R)-10-formyltetrahydrofolate + 5-amino-1-(5-phospho-beta-D-ribosyl)imidazole-4-carboxamide = 5-formamido-1-(5-phospho-D-ribosyl)imidazole-4-carboxamide + (6S)-5,6,7,8-tetrahydrofolate. It catalyses the reaction IMP + H2O = 5-formamido-1-(5-phospho-D-ribosyl)imidazole-4-carboxamide. It participates in purine metabolism; IMP biosynthesis via de novo pathway; 5-formamido-1-(5-phospho-D-ribosyl)imidazole-4-carboxamide from 5-amino-1-(5-phospho-D-ribosyl)imidazole-4-carboxamide (10-formyl THF route): step 1/1. The protein operates within purine metabolism; IMP biosynthesis via de novo pathway; IMP from 5-formamido-1-(5-phospho-D-ribosyl)imidazole-4-carboxamide: step 1/1. The protein is Bifunctional purine biosynthesis protein PurH of Streptococcus equi subsp. equi (strain 4047).